Consider the following 145-residue polypeptide: ATP synthase epsilon chain (145 aa).

Belongs to the ATPase epsilon chain family. As to quaternary structure, F-type ATPases have 2 components, CF(1) - the catalytic core - and CF(0) - the membrane proton channel. CF(1) has five subunits: alpha(3), beta(3), gamma(1), delta(1), epsilon(1). CF(0) has three main subunits: a, b and c.

It localises to the cell inner membrane. Functionally, produces ATP from ADP in the presence of a proton gradient across the membrane. This chain is ATP synthase epsilon chain, found in Francisella tularensis subsp. tularensis (strain FSC 198).